We begin with the raw amino-acid sequence, 290 residues long: Type II restriction enzyme MjaIII (290 aa).

The protein belongs to the DpnII type II restriction endonuclease family.

It catalyses the reaction Endonucleolytic cleavage of DNA to give specific double-stranded fragments with terminal 5'-phosphates.. Its function is as follows. A P subtype restriction enzyme that recognizes the double-stranded sequence 5'-GATC-3'; the cleavage site is unknown. The polypeptide is Type II restriction enzyme MjaIII (mjaIIIR) (Methanocaldococcus jannaschii (strain ATCC 43067 / DSM 2661 / JAL-1 / JCM 10045 / NBRC 100440) (Methanococcus jannaschii)).